A 381-amino-acid chain; its full sequence is 4-hydroxyphenylpyruvate dioxygenase (381 aa).

VOC domains are found at residues 22-156 (GMDA…LVDR) and 184-338 (AIDH…IFTK). Fe cation is bound by residues histidine 187, histidine 270, and glutamate 349.

The protein belongs to the 4HPPD family. Homodimer. The cofactor is Fe cation.

The catalysed reaction is 3-(4-hydroxyphenyl)pyruvate + O2 = homogentisate + CO2. Its pathway is amino-acid degradation; L-phenylalanine degradation; acetoacetate and fumarate from L-phenylalanine: step 3/6. The sequence is that of 4-hydroxyphenylpyruvate dioxygenase (hpd) from Streptomyces avermitilis (strain ATCC 31267 / DSM 46492 / JCM 5070 / NBRC 14893 / NCIMB 12804 / NRRL 8165 / MA-4680).